The following is a 264-amino-acid chain: MSKITSSTLRTFKSEGKKFTALTAYDASFANAFDSEGVDVLLVGDSMGMVLQGHNDTLPVTVDDIAYHTRCVRRGVERALLIADMPFMSYATPEQTMTNATTLMQAGANMVKVEGGHWLLESVKMLTERGIPVCAHLGLTPQSVHVFGGFKIQGRDADNAQRILDEAKALEAAGAQLLVVECIPAPLAKAITEALTIPVIGIGAGADTDGQILVMHDVLGISSGYIPRFSKNYLKQTGEIRSAVRAYIDEVAQGVFPAEEHTFS.

Residues Asp-45 and Asp-84 each coordinate Mg(2+). Residues 45-46 (DS), Asp-84, and Lys-112 each bind 3-methyl-2-oxobutanoate. Glu-114 contributes to the Mg(2+) binding site. Glu-181 serves as the catalytic Proton acceptor.

It belongs to the PanB family. As to quaternary structure, homodecamer; pentamer of dimers. The cofactor is Mg(2+).

It is found in the cytoplasm. It catalyses the reaction 3-methyl-2-oxobutanoate + (6R)-5,10-methylene-5,6,7,8-tetrahydrofolate + H2O = 2-dehydropantoate + (6S)-5,6,7,8-tetrahydrofolate. Its pathway is cofactor biosynthesis; (R)-pantothenate biosynthesis; (R)-pantoate from 3-methyl-2-oxobutanoate: step 1/2. Its function is as follows. Catalyzes the reversible reaction in which hydroxymethyl group from 5,10-methylenetetrahydrofolate is transferred onto alpha-ketoisovalerate to form ketopantoate. The chain is 3-methyl-2-oxobutanoate hydroxymethyltransferase from Shewanella piezotolerans (strain WP3 / JCM 13877).